Reading from the N-terminus, the 360-residue chain is Phospho-N-acetylmuramoyl-pentapeptide-transferase (360 aa).

10 consecutive transmembrane segments (helical) span residues 27–47, 70–90, 98–118, 134–154, 168–188, 199–219, 239–259, 263–283, 288–308, and 337–357; these read GALFTAGFFVFWFGPWIISLL, GTPTMGGLMILAGAVVSILLW, VWVTLAVTLGFGAIGFYDDYL, LLLEFAIAGAACLLISIYSPA, ALLNLGWFWVPFAAFVIVGAG, GLAIVPVMIACGTFGVIAYLV, LAVVCGAVIGAGLGFLWFNAP, IFMGDTGSLALGGLLGAIAVA, IVLAIVGGLFVLEIMSVIIQV, and QVVIRFWIIAVILALVGLATL.

The protein belongs to the glycosyltransferase 4 family. MraY subfamily. Mg(2+) serves as cofactor.

The protein resides in the cell inner membrane. It carries out the reaction UDP-N-acetyl-alpha-D-muramoyl-L-alanyl-gamma-D-glutamyl-meso-2,6-diaminopimeloyl-D-alanyl-D-alanine + di-trans,octa-cis-undecaprenyl phosphate = di-trans,octa-cis-undecaprenyl diphospho-N-acetyl-alpha-D-muramoyl-L-alanyl-D-glutamyl-meso-2,6-diaminopimeloyl-D-alanyl-D-alanine + UMP. It functions in the pathway cell wall biogenesis; peptidoglycan biosynthesis. Catalyzes the initial step of the lipid cycle reactions in the biosynthesis of the cell wall peptidoglycan: transfers peptidoglycan precursor phospho-MurNAc-pentapeptide from UDP-MurNAc-pentapeptide onto the lipid carrier undecaprenyl phosphate, yielding undecaprenyl-pyrophosphoryl-MurNAc-pentapeptide, known as lipid I. This chain is Phospho-N-acetylmuramoyl-pentapeptide-transferase, found in Methylorubrum populi (strain ATCC BAA-705 / NCIMB 13946 / BJ001) (Methylobacterium populi).